Reading from the N-terminus, the 273-residue chain is Proteasome subunit beta type-10 (273 aa).

Methionine 1 carries the post-translational modification N-acetylmethionine. Residues 1 to 39 constitute a propeptide, removed in mature form; it reads MLKQAVEHRGGFSFENCQRNASLEHVLPGLRVPLARKTG. The active-site Nucleophile is the threonine 40. Serine 230 is subject to Phosphoserine.

Belongs to the peptidase T1B family. In terms of assembly, the 26S proteasome consists of a 20S proteasome core and two 19S regulatory subunits. The 20S proteasome core is composed of 28 subunits that are arranged in four stacked rings, resulting in a barrel-shaped structure. The two end rings are each formed by seven alpha subunits, and the two central rings are each formed by seven beta subunits. The catalytic chamber with the active sites is on the inside of the barrel. Component of the immunoproteasome, where it displaces the equivalent housekeeping subunit PSMB7. Component of the spermatoproteasome, a form of the proteasome specifically found in testis. Post-translationally, autocleaved. The resulting N-terminal Thr residue of the mature subunit is responsible for the nucleophile proteolytic activity.

The protein localises to the cytoplasm. It is found in the nucleus. It carries out the reaction Cleavage of peptide bonds with very broad specificity.. Its function is as follows. The proteasome is a multicatalytic proteinase complex which is characterized by its ability to cleave peptides with Arg, Phe, Tyr, Leu, and Glu adjacent to the leaving group at neutral or slightly basic pH. The proteasome has an ATP-dependent proteolytic activity. This subunit is involved in antigen processing to generate class I binding peptides. In Rattus norvegicus (Rat), this protein is Proteasome subunit beta type-10 (Psmb10).